A 216-amino-acid chain; its full sequence is NADH-quinone oxidoreductase subunit C (216 aa).

This sequence belongs to the complex I 30 kDa subunit family. NDH-1 is composed of 14 different subunits. Subunits NuoB, C, D, E, F, and G constitute the peripheral sector of the complex.

Its subcellular location is the cell inner membrane. The enzyme catalyses a quinone + NADH + 5 H(+)(in) = a quinol + NAD(+) + 4 H(+)(out). Functionally, NDH-1 shuttles electrons from NADH, via FMN and iron-sulfur (Fe-S) centers, to quinones in the respiratory chain. The immediate electron acceptor for the enzyme in this species is believed to be ubiquinone. Couples the redox reaction to proton translocation (for every two electrons transferred, four hydrogen ions are translocated across the cytoplasmic membrane), and thus conserves the redox energy in a proton gradient. This Francisella tularensis subsp. holarctica (strain OSU18) protein is NADH-quinone oxidoreductase subunit C.